The following is a 345-amino-acid chain: Uroporphyrinogen decarboxylase (345 aa).

Residues 27–31 (RQAGR), Phe46, Asp76, Tyr152, Ser207, and His320 contribute to the substrate site.

It belongs to the uroporphyrinogen decarboxylase family. As to quaternary structure, homodimer.

The protein localises to the cytoplasm. It carries out the reaction uroporphyrinogen III + 4 H(+) = coproporphyrinogen III + 4 CO2. Its pathway is porphyrin-containing compound metabolism; protoporphyrin-IX biosynthesis; coproporphyrinogen-III from 5-aminolevulinate: step 4/4. Functionally, catalyzes the decarboxylation of four acetate groups of uroporphyrinogen-III to yield coproporphyrinogen-III. The polypeptide is Uroporphyrinogen decarboxylase (Geobacillus thermodenitrificans (strain NG80-2)).